Here is a 116-residue protein sequence, read N- to C-terminus: Non-specific lipid-transfer protein (116 aa).

A signal peptide spans 1 to 23 (MASMKVVCVALIMCIVIAPMAES). Cystine bridges form between Cys-27/Cys-74, Cys-37/Cys-51, Cys-52/Cys-97, and Cys-72/Cys-111.

It belongs to the plant LTP family.

Functionally, plant non-specific lipid-transfer proteins transfer phospholipids as well as galactolipids across membranes. May play a role in wax or cutin deposition in the cell walls of expanding epidermal cells and certain secretory tissues. The protein is Non-specific lipid-transfer protein of Cicer arietinum (Chickpea).